The following is a 105-amino-acid chain: Large ribosomal subunit protein bL21 (105 aa).

This sequence belongs to the bacterial ribosomal protein bL21 family. Part of the 50S ribosomal subunit. Contacts protein L20.

Functionally, this protein binds to 23S rRNA in the presence of protein L20. The chain is Large ribosomal subunit protein bL21 from Dictyoglomus thermophilum (strain ATCC 35947 / DSM 3960 / H-6-12).